A 491-amino-acid polypeptide reads, in one-letter code: Chromosomal replication initiator protein DnaA (491 aa).

The domain I, interacts with DnaA modulators stretch occupies residues 1 to 69; that stretch reads MTTWDKCLKK…TIQECHGNDL (69 aa). The domain II stretch occupies residues 69–154; it reads LIIEYSNKKF…KEDEEYSFGL (86 aa). Positions 155–371 are domain III, AAA+ region; that stretch reads PLKEKYVFDS…GALNRVLTTS (217 aa). ATP-binding residues include G199, G201, K202, and T203. The segment at 372–491 is domain IV, binds dsDNA; it reads KFNHKDPTIE…YELLLDKISR (120 aa).

This sequence belongs to the DnaA family. In terms of assembly, oligomerizes as a right-handed, spiral filament on DNA at oriC.

The protein localises to the cytoplasm. Functionally, plays an essential role in the initiation and regulation of chromosomal replication. ATP-DnaA binds to the origin of replication (oriC) to initiate formation of the DNA replication initiation complex once per cell cycle. Binds the DnaA box (a 9 base pair repeat at the origin) and separates the double-stranded (ds)DNA. Forms a right-handed helical filament on oriC DNA; dsDNA binds to the exterior of the filament while single-stranded (ss)DNA is stabiized in the filament's interior. The ATP-DnaA-oriC complex binds and stabilizes one strand of the AT-rich DNA unwinding element (DUE), permitting loading of DNA polymerase. After initiation quickly degrades to an ADP-DnaA complex that is not apt for DNA replication. Binds acidic phospholipids. This is Chromosomal replication initiator protein DnaA from Francisella tularensis subsp. holarctica (strain LVS).